The primary structure comprises 240 residues: Zinc finger CCCH domain-containing protein 52 (240 aa).

2 disordered regions span residues 1 to 37 (MDARKRGRPEAAASHNSNGGFKRSKQEMESISTGLGS) and 81 to 106 (SQVSRNMQGSGGPGGRFSGRGDPGSG). The C3H1-type 1 zinc-finger motif lies at 36-64 (GSKSKPCTKFFSTSGCPFGDNCHFLHYVP). The span at 89 to 104 (GSGGPGGRFSGRGDPG) shows a compositional bias: gly residues. The KH domain occupies 113 to 177 (ASTSKISVDA…EQINVASGMV (65 aa)). Residues 205–232 (NYKTKICDRYSKGNCTYGDRCHFAHGES) form a C3H1-type 2 zinc finger.

The polypeptide is Zinc finger CCCH domain-containing protein 52 (Arabidopsis thaliana (Mouse-ear cress)).